We begin with the raw amino-acid sequence, 269 residues long: Imidazoleglycerol-phosphate dehydratase 1, chloroplastic (269 aa).

Disordered stretches follow at residues 1–31 (MTTAPFVSPSLPRLHSARASPFPKPSVGSGG) and 54–73 (SGVGGNGSPMAPEESTVSSR). Residues 1–52 (MTTAPFVSPSLPRLHSARASPFPKPSVGSGGGVAFPARTYGSSLRLRSAVMS) constitute a chloroplast transit peptide. Residues glutamate 83, 109–117 (HMLDQLASH), 135–139 (HHSNE), arginine 161, and arginine 183 contribute to the substrate site. Mn(2+) contacts are provided by histidine 109, histidine 135, histidine 136, and glutamate 139. Residues histidine 207, histidine 231, histidine 232, and glutamate 235 each coordinate Mn(2+). Substrate-binding positions include 231–239 (HHIIEATFK) and 261–263 (SSK).

This sequence belongs to the imidazoleglycerol-phosphate dehydratase family. Mn(2+) is required as a cofactor.

It is found in the plastid. Its subcellular location is the chloroplast. It catalyses the reaction D-erythro-1-(imidazol-4-yl)glycerol 3-phosphate = 3-(imidazol-4-yl)-2-oxopropyl phosphate + H2O. Its pathway is amino-acid biosynthesis; L-histidine biosynthesis; L-histidine from 5-phospho-alpha-D-ribose 1-diphosphate: step 6/9. This is Imidazoleglycerol-phosphate dehydratase 1, chloroplastic from Triticum aestivum (Wheat).